Reading from the N-terminus, the 216-residue chain is Peptide methionine sulfoxide reductase MsrA (216 aa).

Cysteine 54 is a catalytic residue.

It belongs to the MsrA Met sulfoxide reductase family.

The catalysed reaction is L-methionyl-[protein] + [thioredoxin]-disulfide + H2O = L-methionyl-(S)-S-oxide-[protein] + [thioredoxin]-dithiol. It carries out the reaction [thioredoxin]-disulfide + L-methionine + H2O = L-methionine (S)-S-oxide + [thioredoxin]-dithiol. In terms of biological role, has an important function as a repair enzyme for proteins that have been inactivated by oxidation. Catalyzes the reversible oxidation-reduction of methionine sulfoxide in proteins to methionine. This chain is Peptide methionine sulfoxide reductase MsrA, found in Xanthomonas oryzae pv. oryzae (strain PXO99A).